A 307-amino-acid chain; its full sequence is MALVRKRRQINLRLPVPPLSVHLPWFSFASSTAPVINNGISASDVEKLHVLGRGSSGIVYKVHHKTTGEIYALKSVNGDMSPAFTRQLAREMEILRRTDSPYVVRCQGIFEKPIVGEVSILMEYMDGGNLESLRGAVTEKQLAGFSRQILKGLSYLHSLKIVHRDIKPANLLLNSRNEVKIADFGVSKIITRSLDYCNSYVGTCAYMSPERFDSAAGENSDVYAGDIWSFGVMILELFVGHFPLLPQGQRPDWATLMCVVCFGEPPRAPEGCSDEFRSFVDCCLRKESSERWTASQLLGHPFLRESL.

The Protein kinase domain maps to 45–303; sequence VEKLHVLGRG…ASQLLGHPFL (259 aa). ATP-binding positions include 51-59 and lysine 74; that span reads LGRGSSGIV. The Proton acceptor role is filled by aspartate 165. Serine 193 and serine 199 each carry phosphoserine. Residue threonine 203 is modified to Phosphothreonine.

The protein belongs to the protein kinase superfamily. STE Ser/Thr protein kinase family. MAP kinase kinase subfamily. In terms of assembly, interacts with MPK15. Phosphorylation at Ser-193 and Ser-199 by MAP kinase kinase kinases positively regulates kinase activity. As to expression, expressed in all tissues, with a relatively higher level in leaves and lower level in roots and flowers.

The enzyme catalyses L-seryl-[protein] + ATP = O-phospho-L-seryl-[protein] + ADP + H(+). It carries out the reaction L-threonyl-[protein] + ATP = O-phospho-L-threonyl-[protein] + ADP + H(+). It catalyses the reaction L-tyrosyl-[protein] + ATP = O-phospho-L-tyrosyl-[protein] + ADP + H(+). Its function is as follows. May function as a negative regulator of polar auxin transport. Positively regulates plant basal and systemic acquired resistance (SAR). Activates MPK3 and MPK6 in vitro. The chain is Mitogen-activated protein kinase kinase 7 (MKK7) from Arabidopsis thaliana (Mouse-ear cress).